The chain runs to 325 residues: Undecaprenyl-phosphate 4-deoxy-4-formamido-L-arabinose transferase (325 aa).

The next 2 helical transmembrane spans lie at 236–256 (LSIF…LLIL) and 270–290 (VFTL…GMGL).

This sequence belongs to the glycosyltransferase 2 family.

Its subcellular location is the cell inner membrane. It catalyses the reaction UDP-4-deoxy-4-formamido-beta-L-arabinose + di-trans,octa-cis-undecaprenyl phosphate = 4-deoxy-4-formamido-alpha-L-arabinopyranosyl di-trans,octa-cis-undecaprenyl phosphate + UDP. Its pathway is glycolipid biosynthesis; 4-amino-4-deoxy-alpha-L-arabinose undecaprenyl phosphate biosynthesis; 4-amino-4-deoxy-alpha-L-arabinose undecaprenyl phosphate from UDP-4-deoxy-4-formamido-beta-L-arabinose and undecaprenyl phosphate: step 1/2. It functions in the pathway bacterial outer membrane biogenesis; lipopolysaccharide biosynthesis. Functionally, catalyzes the transfer of 4-deoxy-4-formamido-L-arabinose from UDP to undecaprenyl phosphate. The modified arabinose is attached to lipid A and is required for resistance to polymyxin and cationic antimicrobial peptides. This is Undecaprenyl-phosphate 4-deoxy-4-formamido-L-arabinose transferase from Edwardsiella ictaluri (strain 93-146).